Consider the following 167-residue polypeptide: MPGNSPHYGRWPQHDFTSLKKLRPQSVTSRIQPGSDVIVCAEMDEQWGYVGAKSRQRWLFYAYDSLRKTVVAHVFGERTMATLGRLMSLLSPFDVVIWMTDGWPLYESRLKGKLHVISKRYTQRIERHNLNLRQHLARLGRKSLSFSKSVELHDKVIGHYLNIKHYQ.

It belongs to the transposase 27 family.

Absolutely required for transposition of IS1. The sequence is that of Insertion element IS1 1 protein InsB (insB1) from Escherichia coli (strain K12).